The chain runs to 685 residues: Nucleolar protein 4 (685 aa).

The segment at 1-21 (MEETIENVEVPSSNVSKQNDD) is disordered. Residues 26-103 (KTLFVRSIPQ…HILRVDIAKR (78 aa)) enclose the RRM 1 domain. The segment covering 106–123 (RSKKTSEVVEKSTPESSE) has biased composition (basic and acidic residues). The tract at residues 106–142 (RSKKTSEVVEKSTPESSEKITGQNNEDEDDADGEDSM) is disordered. Residues 130 to 140 (NEDEDDADGED) show a composition bias toward acidic residues. The region spanning 147–225 (PKLIIRNMPW…RKVAVDFAVQ (79 aa)) is the RRM 2 domain. A compositionally biased stretch (basic and acidic residues) spans 231–242 (DYKKAQPEMNDK). The interval 231-285 (DYKKAQPEMNDKDDNESGNEDAEENHDDEEDENEEEDRQVDQASKNKESKRKAQN) is disordered. A compositionally biased stretch (acidic residues) spans 243-268 (DDNESGNEDAEENHDDEEDENEEEDR). At Ser-247 the chain carries Phosphoserine. 2 RRM domains span residues 290–383 (FSVF…PTLV) and 462–612 (TRLA…FAIE). Thr-379 carries the post-translational modification Phosphothreonine. A compositionally biased stretch (basic residues) spans 622–631 (EQLKQARTKR). The disordered stretch occupies residues 622-685 (EQLKQARTKR…FKRKRKHAKK (64 aa)). Basic and acidic residues predominate over residues 645-672 (SENKKPKKEEATTPTNPDDKKMGDDIKR). Over residues 674 to 685 (IGFKRKRKHAKK) the composition is skewed to basic residues.

Interacts with NOP1.

Its subcellular location is the nucleus. It is found in the nucleolus. In terms of biological role, required for 60S ribosomal subunit synthesis. Probably involved in the processing of 27S rRNA to produce mature 25S rRNA. The polypeptide is Nucleolar protein 4 (NOP4) (Saccharomyces cerevisiae (strain ATCC 204508 / S288c) (Baker's yeast)).